A 1709-amino-acid chain; its full sequence is Protein SHORTAGE IN CHIASMATA 1 homolog (1709 aa).

3 stretches are compositionally biased toward basic and acidic residues: residues proline 532–aspartate 542, aspartate 552–threonine 568, and glutamate 1601–serine 1613. Disordered stretches follow at residues proline 532–proline 586 and lysine 1566–tryptophan 1662.

Belongs to the XPF family. Interacts (via C-terminus) with PTD. Interacts with ZIP4. In terms of tissue distribution, highly expressed in anthers and pistil during meiosis. Expressed in pollen mother cells (PMCs) during meiosis. Expressed at low levels in roots, shoots, leaves, flowers, and glumes.

The protein localises to the chromosome. The protein resides in the nucleus. It localises to the cytoplasm. It is found in the cell membrane. Essential for normal crossover (CO) formation during meiosis. Essential component for the formation of class I meiotic COs. Interacts with PTD, another meiotic component, to regulate CO formation, possibly by stabilizing the recombination intermediates during meiosis. SHOC1 and PTD may form transient heterotrimeric or heterotetrameric complexes with HEI10 and/or ZIP4 to promote class I COs formation. Does not seem to be involved in early meiotic recombination steps involving double-strand break (DSB) formation, processing, and single-strand invasion. Does not seem to be involved in homologous pairing or synaptonemal complex (SC) assembly. This chain is Protein SHORTAGE IN CHIASMATA 1 homolog, found in Oryza sativa subsp. japonica (Rice).